Consider the following 180-residue polypeptide: Putative phycocyanobilin lyase CpcS 2 (180 aa).

Belongs to the CpcS/CpeS biliprotein lyase family.

In terms of biological role, covalently attaches a chromophore to Cys residue(s) of phycobiliproteins (Potential). In vitro does not act as a chromophore lyase for ApcA1, ApcA2, ApcB, ApcD, ApcF, CpcB or PecB, the lyase activity is therefore unsure. The sequence is that of Putative phycocyanobilin lyase CpcS 2 (cpeS2) from Nostoc sp. (strain PCC 7120 / SAG 25.82 / UTEX 2576).